The primary structure comprises 348 residues: Phenylalanine--tRNA ligase alpha subunit (348 aa).

A Mg(2+)-binding site is contributed by E259.

Belongs to the class-II aminoacyl-tRNA synthetase family. Phe-tRNA synthetase alpha subunit type 1 subfamily. In terms of assembly, tetramer of two alpha and two beta subunits. It depends on Mg(2+) as a cofactor.

The protein resides in the cytoplasm. It carries out the reaction tRNA(Phe) + L-phenylalanine + ATP = L-phenylalanyl-tRNA(Phe) + AMP + diphosphate + H(+). This Enterococcus faecalis (strain ATCC 700802 / V583) protein is Phenylalanine--tRNA ligase alpha subunit.